We begin with the raw amino-acid sequence, 22 residues long: Phospholipase A2 (22 aa).

This sequence belongs to the phospholipase A2 family. The cofactor is Ca(2+).

Its subcellular location is the secreted. The catalysed reaction is a 1,2-diacyl-sn-glycero-3-phosphocholine + H2O = a 1-acyl-sn-glycero-3-phosphocholine + a fatty acid + H(+). Its function is as follows. PA2 catalyzes the calcium-dependent hydrolysis of the 2-acyl groups in 3-sn-phosphoglycerides. This is Phospholipase A2 from Struthio camelus (Common ostrich).